We begin with the raw amino-acid sequence, 387 residues long: Chaperone protein DnaJ (387 aa).

In terms of domain architecture, J spans D5 to G70. The segment at G144–N226 adopts a CR-type zinc-finger fold. Residues C157, C160, C174, C177, C200, C203, C214, and C217 each contribute to the Zn(2+) site. 4 CXXCXGXG motif repeats span residues C157–G164, C174–G181, C200–G207, and C214–G221.

It belongs to the DnaJ family. As to quaternary structure, homodimer. Zn(2+) is required as a cofactor.

It localises to the cytoplasm. In terms of biological role, participates actively in the response to hyperosmotic and heat shock by preventing the aggregation of stress-denatured proteins and by disaggregating proteins, also in an autonomous, DnaK-independent fashion. Unfolded proteins bind initially to DnaJ; upon interaction with the DnaJ-bound protein, DnaK hydrolyzes its bound ATP, resulting in the formation of a stable complex. GrpE releases ADP from DnaK; ATP binding to DnaK triggers the release of the substrate protein, thus completing the reaction cycle. Several rounds of ATP-dependent interactions between DnaJ, DnaK and GrpE are required for fully efficient folding. Also involved, together with DnaK and GrpE, in the DNA replication of plasmids through activation of initiation proteins. In Clostridium perfringens (strain 13 / Type A), this protein is Chaperone protein DnaJ.